The chain runs to 94 residues: Aspartyl/glutamyl-tRNA(Asn/Gln) amidotransferase subunit C (94 aa).

It belongs to the GatC family. Heterotrimer of A, B and C subunits.

The catalysed reaction is L-glutamyl-tRNA(Gln) + L-glutamine + ATP + H2O = L-glutaminyl-tRNA(Gln) + L-glutamate + ADP + phosphate + H(+). The enzyme catalyses L-aspartyl-tRNA(Asn) + L-glutamine + ATP + H2O = L-asparaginyl-tRNA(Asn) + L-glutamate + ADP + phosphate + 2 H(+). Allows the formation of correctly charged Asn-tRNA(Asn) or Gln-tRNA(Gln) through the transamidation of misacylated Asp-tRNA(Asn) or Glu-tRNA(Gln) in organisms which lack either or both of asparaginyl-tRNA or glutaminyl-tRNA synthetases. The reaction takes place in the presence of glutamine and ATP through an activated phospho-Asp-tRNA(Asn) or phospho-Glu-tRNA(Gln). The protein is Aspartyl/glutamyl-tRNA(Asn/Gln) amidotransferase subunit C of Desulfatibacillum aliphaticivorans.